The following is a 308-amino-acid chain: Cell division protein FtsX (308 aa).

Residues 1–24 (MISRFFRHLFEALKSLKRNGWMTV) lie on the Cytoplasmic side of the membrane. Residues 25-45 (AAVSSVMITLTLVAIFASVIF) traverse the membrane as a helical segment. Over 46-178 (NTAKLATDIE…NTERLFKLAS (133 aa)) the chain is Extracellular. A helical transmembrane segment spans residues 179 to 199 (FIRVWGLGIAALLIFIAVFLI). The Cytoplasmic portion of the chain corresponds to 200–236 (SNTIRITIISRSREIQIMRLVGAKNSYIRGPFLLEGA). A helical membrane pass occupies residues 237–257 (FIGLLGAIAPSVLVFIVYQIV). The Extracellular portion of the chain corresponds to 258 to 276 (YQSVNKSLVGQNLSMISPD). A helical transmembrane segment spans residues 277 to 297 (LFSPLMIALLFVIGVFIGSLG). The Cytoplasmic segment spans residues 298-308 (SGISMRRFLKI).

This sequence belongs to the ABC-4 integral membrane protein family. FtsX subfamily. In terms of assembly, homodimer. Interacts with FtsE; forms a membrane-associated complex. Interacts (via large extracellular loop) with PcsB (via N-terminal coiled-coil domain). This interaction directs PcsB to equatorial and septal sites of dividing cells.

It is found in the cell membrane. Part of the ABC transporter FtsEX involved in asymmetric cellular division facilitating the initiation of sporulation. Required in maintaining normal growth and cellular morphology. The protein is Cell division protein FtsX of Streptococcus pneumoniae serotype 2 (strain D39 / NCTC 7466).